The sequence spans 901 residues: Probable dipeptidyl-aminopeptidase B (901 aa).

The span at 1 to 22 shows a compositional bias: low complexity; the sequence is MSSPRPSTSSTSSDSGLSVDTT. Residues 1 to 67 form a disordered region; it reads MSSPRPSTSS…EPFLPSAKKQ (67 aa). Residues 1–76 lie on the Cytoplasmic side of the membrane; sequence MSSPRPSTSS…QAASGSRTSR (76 aa). Residues 77-97 traverse the membrane as a helical; Signal-anchor for type II membrane protein segment; sequence LIWGLVILCVAGWLWGLVLFV. At 98–901 the chain is on the vacuolar side; sequence TQNRSAQQSV…VKRSLPMLVK (804 aa). Residues N334 and N625 are each glycosylated (N-linked (GlcNAc...) asparagine). S739 serves as the catalytic Charge relay system. N793 carries N-linked (GlcNAc...) asparagine glycosylation. Residues D816 and H849 each act as charge relay system in the active site.

It belongs to the peptidase S9B family.

The protein resides in the vacuole membrane. The enzyme catalyses Release of an N-terminal dipeptide, Xaa-Yaa-|-Zaa-, from a polypeptide, preferentially when Yaa is Pro, provided Zaa is neither Pro nor hydroxyproline.. Type IV dipeptidyl-peptidase which removes N-terminal dipeptides sequentially from polypeptides having unsubstituted N-termini provided that the penultimate residue is proline. The sequence is that of Probable dipeptidyl-aminopeptidase B (dapB) from Aspergillus niger (strain ATCC MYA-4892 / CBS 513.88 / FGSC A1513).